Reading from the N-terminus, the 125-residue chain is Large ribosomal subunit protein bL12 (125 aa).

Residues Pro-96–Lys-125 are disordered. The segment covering Gly-102–Glu-117 has biased composition (basic and acidic residues).

The protein belongs to the bacterial ribosomal protein bL12 family. As to quaternary structure, homodimer. Part of the ribosomal stalk of the 50S ribosomal subunit. Forms a multimeric L10(L12)X complex, where L10 forms an elongated spine to which 2 to 4 L12 dimers bind in a sequential fashion. Binds GTP-bound translation factors.

In terms of biological role, forms part of the ribosomal stalk which helps the ribosome interact with GTP-bound translation factors. Is thus essential for accurate translation. This Alcanivorax borkumensis (strain ATCC 700651 / DSM 11573 / NCIMB 13689 / SK2) protein is Large ribosomal subunit protein bL12.